Consider the following 1183-residue polypeptide: DNA-directed RNA polymerase subunit beta (1183 aa).

It belongs to the RNA polymerase beta chain family. The RNAP catalytic core consists of 2 alpha, 1 beta, 1 beta' and 1 omega subunit. When a sigma factor is associated with the core the holoenzyme is formed, which can initiate transcription.

It catalyses the reaction RNA(n) + a ribonucleoside 5'-triphosphate = RNA(n+1) + diphosphate. DNA-dependent RNA polymerase catalyzes the transcription of DNA into RNA using the four ribonucleoside triphosphates as substrates. This is DNA-directed RNA polymerase subunit beta from Staphylococcus aureus (strain Mu50 / ATCC 700699).